A 436-amino-acid chain; its full sequence is Trigger factor (436 aa).

The 86-residue stretch at Asp161–Pro246 folds into the PPIase FKBP-type domain.

The protein belongs to the FKBP-type PPIase family. Tig subfamily.

Its subcellular location is the cytoplasm. It catalyses the reaction [protein]-peptidylproline (omega=180) = [protein]-peptidylproline (omega=0). Functionally, involved in protein export. Acts as a chaperone by maintaining the newly synthesized protein in an open conformation. Functions as a peptidyl-prolyl cis-trans isomerase. The polypeptide is Trigger factor (Tolumonas auensis (strain DSM 9187 / NBRC 110442 / TA 4)).